The chain runs to 91 residues: HssA/B-like protein 24 (91 aa).

It belongs to the hssA/B family.

This chain is HssA/B-like protein 24 (hssl24), found in Dictyostelium discoideum (Social amoeba).